A 242-amino-acid polypeptide reads, in one-letter code: Lactate utilization protein A 2 (242 aa).

The protein belongs to the LutA/YkgE family.

Its function is as follows. Is involved in L-lactate degradation and allows cells to grow with lactate as the sole carbon source. The protein is Lactate utilization protein A 2 of Bacillus cereus (strain 03BB102).